Consider the following 424-residue polypeptide: Tubby protein homolog 1 (424 aa).

The interval M19–N47 is disordered. The span at T37–N47 shows a compositional bias: low complexity.

The protein belongs to the TUB family. As to quaternary structure, interacts with rgb-3.

The protein resides in the cytoplasm. It is found in the cell projection. It localises to the axon. Its subcellular location is the dendrite. The protein localises to the cilium. Has a role in fat regulation independent of daf-16. Implicated in ciliar sensory function which is required for normal sensory behavior such as chemotaxis. Functions in life span control via the insulin/IGF-1 pathway. Thought to be involved in neuronal trafficking. This is Tubby protein homolog 1 from Caenorhabditis briggsae.